The sequence spans 341 residues: GTP 3',8-cyclase (341 aa).

The Radical SAM core domain maps to lysine 11 to glutamate 231. Arginine 20 lines the GTP pocket. [4Fe-4S] cluster-binding residues include cysteine 27 and cysteine 31. Tyrosine 33 serves as a coordination point for S-adenosyl-L-methionine. Cysteine 34 serves as a coordination point for [4Fe-4S] cluster. Arginine 75 provides a ligand contact to GTP. Glycine 79 is an S-adenosyl-L-methionine binding site. Threonine 106 contacts GTP. Serine 130 provides a ligand contact to S-adenosyl-L-methionine. GTP is bound at residue lysine 167. S-adenosyl-L-methionine is bound at residue methionine 201. Positions 265 and 268 each coordinate [4Fe-4S] cluster. Arginine 270 to arginine 272 serves as a coordination point for GTP. Cysteine 282 serves as a coordination point for [4Fe-4S] cluster.

It belongs to the radical SAM superfamily. MoaA family. As to quaternary structure, monomer and homodimer. [4Fe-4S] cluster serves as cofactor.

The catalysed reaction is GTP + AH2 + S-adenosyl-L-methionine = (8S)-3',8-cyclo-7,8-dihydroguanosine 5'-triphosphate + 5'-deoxyadenosine + L-methionine + A + H(+). It participates in cofactor biosynthesis; molybdopterin biosynthesis. Functionally, catalyzes the cyclization of GTP to (8S)-3',8-cyclo-7,8-dihydroguanosine 5'-triphosphate. Required for both nitrate assimilation and respiration. This is GTP 3',8-cyclase from Bacillus subtilis (strain 168).